The sequence spans 184 residues: MSENYTPRLKTRYRSEIRETLNKEFEYANVMQIPGVTKVVVNMGVGDAARDSKLINGALNDLTLITGQKPQIRRAKKAIANFKLREGMPIGARVTLRGDRMWEFLDRLLTVALPRIRDFRGLSDKQFDGHGNYTFGLSEQSMFYELDVDKIDRPRGMNITVVTSATNNEEGRALLRELGFPFKK.

This sequence belongs to the universal ribosomal protein uL5 family. As to quaternary structure, part of the 50S ribosomal subunit; part of the 5S rRNA/L5/L18/L25 subcomplex. Contacts the 5S rRNA and the P site tRNA. Forms a bridge to the 30S subunit in the 70S ribosome.

Functionally, this is one of the proteins that bind and probably mediate the attachment of the 5S RNA into the large ribosomal subunit, where it forms part of the central protuberance. In the 70S ribosome it contacts protein S13 of the 30S subunit (bridge B1b), connecting the 2 subunits; this bridge is implicated in subunit movement. Contacts the P site tRNA; the 5S rRNA and some of its associated proteins might help stabilize positioning of ribosome-bound tRNAs. The chain is Large ribosomal subunit protein uL5 from Corynebacterium kroppenstedtii (strain DSM 44385 / JCM 11950 / CIP 105744 / CCUG 35717).